The sequence spans 766 residues: Phospholipid phosphatase-related protein type 4 (766 aa).

S37 carries the phosphoserine modification. A run of 3 helical transmembrane segments spans residues 68 to 88, 120 to 140, and 179 to 199; these read LPCFYFVELPILASSVVSLYF, AIPFLMLLSLAFAGPAITIMV, and FVGVHVFGLCSTALITDIIQL. Residues N215 and N220 are each glycosylated (N-linked (GlcNAc...) asparagine). Residues 248–268 traverse the membrane as a helical segment; that stretch reads SFPSQHATLAAFAAVYVSMYF. Residue N269 is glycosylated (N-linked (GlcNAc...) asparagine). The next 2 helical transmembrane spans lie at 277–297 and 309–329; these read KLLKPLLVFTFIICGIICGLT and VYCGFLIGGGIALYLGLYAVG. Phosphoserine is present on S347. An N-linked (GlcNAc...) asparagine glycan is attached at N363. Residue S386 is modified to Phosphoserine. N433 carries N-linked (GlcNAc...) asparagine glycosylation. S439 is subject to Phosphoserine. A disordered region spans residues 454–494; sequence SKNESRKMSLQVMDTEPEGQSPPRSIEMRSSSEPSRVGVNG. A glycan (N-linked (GlcNAc...) asparagine) is linked at N456. Phosphoserine occurs at positions 462 and 474. N-linked (GlcNAc...) asparagine glycosylation is found at N515, N545, and N570. S608 bears the Phosphoserine mark. Disordered regions lie at residues 634-654, 672-701, and 742-766; these read PIIQIPSSTEGEGSGSWKWKA, DSESCESLKDSFGSGDRKRSNIDSNEHHHH, and ERSNSPENTRNIFYKGTSPTRAYKD. Residues 672–697 are compositionally biased toward basic and acidic residues; that stretch reads DSESCESLKDSFGSGDRKRSNIDSNE. Polar residues predominate over residues 743-752; that stretch reads RSNSPENTRN.

The protein belongs to the PA-phosphatase related phosphoesterase family. O-glycosylated. Probably at Ser-347. In terms of tissue distribution, brain-specific, it is exclusively expressed in neurons (at protein level).

Its subcellular location is the postsynaptic density membrane. Functionally, postsynaptic density membrane protein that indirectly regulates glutamatergic synaptic transmission through lysophosphatidic acid (LPA)-mediated signaling pathways. Binds lysophosphatidic acid (LPA) and mediates its internalization into cells. Could act as receptor or a transporter of this lipid at the post-synaptic membrane. Modulates lysophosphatidic acid (LPA) activity in neuron axonal outgrowth during development by attenuating phospholipid-induced axon collapse. The protein is Phospholipid phosphatase-related protein type 4 of Mus musculus (Mouse).